A 356-amino-acid chain; its full sequence is S-adenosylmethionine:tRNA ribosyltransferase-isomerase (356 aa).

It belongs to the QueA family. In terms of assembly, monomer.

The protein resides in the cytoplasm. It catalyses the reaction 7-aminomethyl-7-carbaguanosine(34) in tRNA + S-adenosyl-L-methionine = epoxyqueuosine(34) in tRNA + adenine + L-methionine + 2 H(+). It participates in tRNA modification; tRNA-queuosine biosynthesis. Transfers and isomerizes the ribose moiety from AdoMet to the 7-aminomethyl group of 7-deazaguanine (preQ1-tRNA) to give epoxyqueuosine (oQ-tRNA). The chain is S-adenosylmethionine:tRNA ribosyltransferase-isomerase from Chromohalobacter salexigens (strain ATCC BAA-138 / DSM 3043 / CIP 106854 / NCIMB 13768 / 1H11).